We begin with the raw amino-acid sequence, 337 residues long: Glycerol-3-phosphate dehydrogenase [NAD(P)+] (337 aa).

NADPH is bound by residues tryptophan 11, arginine 30, and lysine 113. 3 residues coordinate sn-glycerol 3-phosphate: lysine 113, glycine 141, and serine 143. An NADPH-binding site is contributed by alanine 145. Lysine 196, aspartate 249, serine 259, arginine 260, and asparagine 261 together coordinate sn-glycerol 3-phosphate. The active-site Proton acceptor is the lysine 196. NADPH is bound at residue arginine 260. Residues valine 284 and glutamate 286 each contribute to the NADPH site.

It belongs to the NAD-dependent glycerol-3-phosphate dehydrogenase family.

It is found in the cytoplasm. The enzyme catalyses sn-glycerol 3-phosphate + NAD(+) = dihydroxyacetone phosphate + NADH + H(+). The catalysed reaction is sn-glycerol 3-phosphate + NADP(+) = dihydroxyacetone phosphate + NADPH + H(+). It participates in membrane lipid metabolism; glycerophospholipid metabolism. Functionally, catalyzes the reduction of the glycolytic intermediate dihydroxyacetone phosphate (DHAP) to sn-glycerol 3-phosphate (G3P), the key precursor for phospholipid synthesis. The protein is Glycerol-3-phosphate dehydrogenase [NAD(P)+] of Leptothrix cholodnii (strain ATCC 51168 / LMG 8142 / SP-6) (Leptothrix discophora (strain SP-6)).